The following is a 285-amino-acid chain: Nucleotide-binding protein PFL_0912 (285 aa).

Position 8–15 (8–15) interacts with ATP; the sequence is GRSGSGKS. 60–63 contributes to the GTP binding site; that stretch reads DARN.

This sequence belongs to the RapZ-like family.

Displays ATPase and GTPase activities. The protein is Nucleotide-binding protein PFL_0912 of Pseudomonas fluorescens (strain ATCC BAA-477 / NRRL B-23932 / Pf-5).